Here is a 172-residue protein sequence, read N- to C-terminus: C-phycocyanin beta chain (172 aa).

Asparagine 72 carries the post-translational modification N4-methylasparagine. (2R,3E)-phycocyanobilin is bound by residues cysteine 82 and cysteine 153.

It belongs to the phycobiliprotein family. In terms of assembly, heterodimer of an alpha and a beta subunit, which further assembles into trimers and the trimers into hexamers. The basic functional unit of phycobiliproteins is a ring-shaped hexamer formed from two back-to-back trimers contacting via the alpha chain subunits. The trimers are composed of alpha/beta subunit heterodimers arranged around a three-fold axis of symmetry. The phycoerythrins also contain a gamma subunit which is located in the center of the hexamer. Contains two covalently linked phycocyanobilin chromophores.

It localises to the plastid. The protein localises to the cyanelle thylakoid membrane. Light-harvesting photosynthetic bile pigment-protein from the phycobiliprotein complex (phycobilisome, PBS). Phycocyanin is the major phycobiliprotein in the PBS rod. This Cyanophora paradoxa protein is C-phycocyanin beta chain (cpcB).